Reading from the N-terminus, the 306-residue chain is Ribonuclease Z (306 aa).

Zn(2+) contacts are provided by His-63, His-65, Asp-67, His-68, His-141, Asp-208, and His-266. Asp-67 functions as the Proton acceptor in the catalytic mechanism.

The protein belongs to the RNase Z family. As to quaternary structure, homodimer. It depends on Zn(2+) as a cofactor.

It catalyses the reaction Endonucleolytic cleavage of RNA, removing extra 3' nucleotides from tRNA precursor, generating 3' termini of tRNAs. A 3'-hydroxy group is left at the tRNA terminus and a 5'-phosphoryl group is left at the trailer molecule.. In terms of biological role, zinc phosphodiesterase, which displays some tRNA 3'-processing endonuclease activity. Probably involved in tRNA maturation, by removing a 3'-trailer from precursor tRNA. This chain is Ribonuclease Z, found in Protochlamydia amoebophila (strain UWE25).